The primary structure comprises 294 residues: Cytidine deaminase (294 aa).

CMP/dCMP-type deaminase domains lie at 48-168 and 186-294; these read DEDA…FGPK and LTGD…TLLA. A substrate-binding site is contributed by 89 to 91; it reads NME. Histidine 102 provides a ligand contact to Zn(2+). Catalysis depends on glutamate 104, which acts as the Proton donor. Cysteine 129 and cysteine 132 together coordinate Zn(2+).

It belongs to the cytidine and deoxycytidylate deaminase family. Homodimer. Zn(2+) serves as cofactor.

The catalysed reaction is cytidine + H2O + H(+) = uridine + NH4(+). It carries out the reaction 2'-deoxycytidine + H2O + H(+) = 2'-deoxyuridine + NH4(+). In terms of biological role, this enzyme scavenges exogenous and endogenous cytidine and 2'-deoxycytidine for UMP synthesis. In Enterobacter sp. (strain 638), this protein is Cytidine deaminase.